The following is a 130-amino-acid chain: Neelaredoxin (130 aa).

Fe cation is bound by residues Glu15, His17, His45, His51, Cys115, and His118.

This sequence belongs to the desulfoferrodoxin family. In terms of assembly, monomer. It depends on Fe cation as a cofactor.

The catalysed reaction is 2 superoxide + 2 H(+) = H2O2 + O2. Non-heme iron protein. In Megalodesulfovibrio gigas (Desulfovibrio gigas), this protein is Neelaredoxin (nlr).